Consider the following 484-residue polypeptide: ATP-dependent rRNA helicase RRP3 (484 aa).

Residues 1–10 (MAIVGSNSVS) are compositionally biased toward polar residues. Positions 1-61 (MAIVGSNSVS…SSQKSKNIVE (61 aa)) are disordered. Basic and acidic residues predominate over residues 18–54 (RNDARDLAEKIKRNALKKQEQDKKQQLEEESKPESSQ). A Q motif motif is present at residues 71 to 99 (STFSELKLVPELLEAIQQMKFSKPTPIQS). One can recognise a Helicase ATP-binding domain in the interval 102-273 (IPHALEGKDI…RASLHNPVRV (172 aa)). Position 115 to 122 (115 to 122 (AQTGSGKT)) interacts with ATP. The DEAD box motif lies at 221–224 (DEAD). One can recognise a Helicase C-terminal domain in the interval 300 to 444 (YLIHLLNEFV…KDPSPPKAML (145 aa)). Residues 460 to 484 (RQTKEFHEKTRRGRRGKDDKDREEH) are disordered. Residues 475-484 (GKDDKDREEH) are compositionally biased toward basic and acidic residues.

This sequence belongs to the DEAD box helicase family. DDX47/RRP3 subfamily. Interacts with the SSU processome.

The protein localises to the nucleus. It catalyses the reaction ATP + H2O = ADP + phosphate + H(+). Its function is as follows. ATP-dependent rRNA helicase required for pre-ribosomal RNA processing. Involved in the maturation of the 35S-pre-rRNA and to its cleavage to mature 18S rRNA. The polypeptide is ATP-dependent rRNA helicase RRP3 (Scheffersomyces stipitis (strain ATCC 58785 / CBS 6054 / NBRC 10063 / NRRL Y-11545) (Yeast)).